We begin with the raw amino-acid sequence, 45 residues long: Photosystem II reaction center protein K (45 aa).

The propeptide occupies 1–8 (MEAVFLLA). The chain crosses the membrane as a helical span at residues 24–44 (LPVIPVFFLALAFVWQAAVGF).

It belongs to the PsbK family. PSII is composed of 1 copy each of membrane proteins PsbA, PsbB, PsbC, PsbD, PsbE, PsbF, PsbH, PsbI, PsbJ, PsbK, PsbL, PsbM, PsbT, PsbX, PsbY, PsbZ, Psb30/Ycf12, peripheral proteins PsbO, CyanoQ (PsbQ), PsbU, PsbV and a large number of cofactors. It forms dimeric complexes.

It localises to the cellular thylakoid membrane. Functionally, one of the components of the core complex of photosystem II (PSII). PSII is a light-driven water:plastoquinone oxidoreductase that uses light energy to abstract electrons from H(2)O, generating O(2) and a proton gradient subsequently used for ATP formation. It consists of a core antenna complex that captures photons, and an electron transfer chain that converts photonic excitation into a charge separation. In Crocosphaera subtropica (strain ATCC 51142 / BH68) (Cyanothece sp. (strain ATCC 51142)), this protein is Photosystem II reaction center protein K.